A 314-amino-acid polypeptide reads, in one-letter code: tRNA pseudouridine synthase B (314 aa).

His43 contacts substrate. The active-site Nucleophile is the Asp48. The substrate site is built by Tyr76, Tyr179, and Leu200.

It belongs to the pseudouridine synthase TruB family. Type 1 subfamily.

The catalysed reaction is uridine(55) in tRNA = pseudouridine(55) in tRNA. Its function is as follows. Responsible for synthesis of pseudouridine from uracil-55 in the psi GC loop of transfer RNAs. The sequence is that of tRNA pseudouridine synthase B from Salmonella typhi.